The primary structure comprises 115 residues: Thrombospondin type-1 domain-containing protein 8 (115 aa).

Positions 1-21 (MARTPGALLLAPLLLLQLATP) are cleaved as a signal peptide. The 52-residue stretch at 53–104 (DSILGPWGKWRCLCDLGKQERSREVVGTAPGPVFMDPEKLIQLRPCRQRDCP) folds into the TSP type-1 domain.

In Homo sapiens (Human), this protein is Thrombospondin type-1 domain-containing protein 8.